A 327-amino-acid polypeptide reads, in one-letter code: MGIGVNSDPKVVHHQSIPKPNAMAIANYRAITTKQWQTWVEAARLQALNGKLPQYIPQLSLVDPGNFALDIGDQNGIIYEAGDTDLTFSLMSVVKPFLWLYILHHRGWQWAEQKVGDRPSHLPFNSVEQLEQDGGYPRNTMVNSGAICLAGHIPGATIEQRCENFLTWLNHTAQCQLWLDQELLASVHSLPNPRNLAIAHLLAAKGYVEDATLALETYNQLCCLSGCLKDLFKLGLMLQCPQPPLQPDTTARVKATMAKAGLYEMSEAFFRRTGFICKSGVSGLILACLPAPSPTIFACYSPPLNEEGNPVAPLALLEFLAEFTSRN.

The substrate site is built by S92, N143, N195, Y218, Y263, and V281.

The protein belongs to the glutaminase family. Homotetramer.

It carries out the reaction L-glutamine + H2O = L-glutamate + NH4(+). The sequence is that of Glutaminase from Synechocystis sp. (strain ATCC 27184 / PCC 6803 / Kazusa).